The chain runs to 316 residues: Porphobilinogen deaminase (316 aa).

At cysteine 249 the chain carries S-(dipyrrolylmethanemethyl)cysteine.

It belongs to the HMBS family. In terms of assembly, monomer. Dipyrromethane is required as a cofactor.

It catalyses the reaction 4 porphobilinogen + H2O = hydroxymethylbilane + 4 NH4(+). It functions in the pathway porphyrin-containing compound metabolism; protoporphyrin-IX biosynthesis; coproporphyrinogen-III from 5-aminolevulinate: step 2/4. In terms of biological role, tetrapolymerization of the monopyrrole PBG into the hydroxymethylbilane pre-uroporphyrinogen in several discrete steps. The sequence is that of Porphobilinogen deaminase from Nitrobacter hamburgensis (strain DSM 10229 / NCIMB 13809 / X14).